Reading from the N-terminus, the 147-residue chain is Transcriptional regulator MraZ (147 aa).

2 SpoVT-AbrB domains span residues 5 to 50 (AIAL…PLSA) and 79 to 122 (AQEE…SDAG).

This sequence belongs to the MraZ family. As to quaternary structure, forms oligomers.

It is found in the cytoplasm. The protein resides in the nucleoid. The chain is Transcriptional regulator MraZ from Aromatoleum aromaticum (strain DSM 19018 / LMG 30748 / EbN1) (Azoarcus sp. (strain EbN1)).